We begin with the raw amino-acid sequence, 310 residues long: M1-specific T cell receptor beta chain (310 aa).

An N-terminal signal peptide occupies residues 1 to 21 (MSNQVLCCVVLCLLGANTVDG). The tract at residues 22–114 (GITQSPKYLF…TAFYLCASSI (93 aa)) is t cell receptor beta variable 19. Residues 34 to 131 (EGQNVTLSCE…FGPGTRLTVT (98 aa)) form the Ig-like V-type domain. N-linked (GlcNAc...) asparagine glycosylation is present at Asn-37. A disulfide bridge links Cys-42 with Cys-110. Residues 46 to 50 (LNHDA) form a CDR1 region. A peptide antigen is bound at residue Asp-49. Residues 68-73 (SQIVND) are CDR2. The CDR3 stretch occupies residues 110-122 (CASSIRSSYEQYF). Residues 117–131 (SYEQYFGPGTRLTVT) are t cell receptor beta joining 2-7. The t cell receptor beta constant 2 stretch occupies residues 133–310 (DLKNVFPPKV…AMVKRKDSRG (178 aa)). In terms of domain architecture, Ig-like C1-type spans 140–249 (PKVAVFEPSE…WTQDRAKPVT (110 aa)). Cysteines 162 and 227 form a disulfide. Residue Asn-201 is glycosylated (N-linked (GlcNAc...) asparagine). The interval 262 to 276 (CGFTSESYQQGVLSA) is connecting peptide. The helical transmembrane segment at 277-299 (TILYEILLGKATLYAVLVSALVL) threads the bilayer. Topologically, residues 300 to 310 (MAMVKRKDSRG) are cytoplasmic.

As to quaternary structure, disulfide-linked heterodimer with TRAV27*01J42*01C*01 alpha chain. The TR primarily interacts via its CDR3-beta domain with M/matrix protein 1-derived peptide (GILGFVFTL) displayed by HLA-A*02.01 in a 'peg-notch' recognition mode. The alpha-beta TR associates with the transmembrane signaling CD3 coreceptor proteins to form the TR-CD3 (TCR). The assembly of alpha-beta TR heterodimers with CD3 occurs in the endoplasmic reticulum where a single alpha-beta TR heterodimer associates with one CD3D-CD3E heterodimer, one CD3G-CD3E heterodimer and one CD247 homodimer forming a stable octameric structure. CD3D-CD3E and CD3G-CD3E heterodimers preferentially associate with TR alpha and TR beta chains (via TM domain), respectively. The association of the CD247 homodimer is the last step of TCR assembly in the endoplasmic reticulum and is required for transport to the cell surface. As to expression, expressed in M/matrix protein 1-specific effector memory CD8-positive T cells readily detectable in the peripheral blood, secondary lymphoid organs and lung (primary site of infection) of IAV infected individuals.

It is found in the cell membrane. The beta chain of TRAV27*01J42*01C*01/TRBV19*01J2S7*01C*02 alpha-beta T cell receptor (TR) clonotype that is specific for HLA-A*02:01-restricted M/matrix protein 1 immunodominant epitope GILGFVFTL of influenza A virus (IAV). Classified as a public TCR clonotype, it is preferentially selected in effector memory CD8-positive T cells among multiple HLA-A*02:01 carriers/individuals and confers long-lived immunity against IAV infection. Can cross-recognize sporadically emerging IAV variants by molecular mimicry, inducing immunity toward different influenza strains. Antigen recognition initiates TR-CD3 clustering on the cell surface and intracellular activation of LCK that phosphorylates the ITAM motifs of CD3G, CD3D, CD3E and CD247 enabling the recruitment of ZAP70. In turn, ZAP70 phosphorylates LAT, which recruits numerous signaling molecules to form the LAT signalosome. The LAT signalosome propagates signal branching to three major signaling pathways, the calcium, the mitogen-activated protein kinase (MAPK) kinase and the nuclear factor NF-kappa-B (NF-kB) pathways, leading to the mobilization of transcription factors that are critical for gene expression and essential for T cell differentiation into effector/memory T cells. This Homo sapiens (Human) protein is M1-specific T cell receptor beta chain.